The primary structure comprises 672 residues: Acetyl-coenzyme A synthetase (672 aa).

Residues 217 to 220 (RRGK) and threonine 335 contribute to the CoA site. Residues 411 to 413 (GEP), 435 to 440 (DTWWQT), aspartate 529, arginine 544, and arginine 555 each bind ATP. Valine 566, histidine 568, and isoleucine 571 together coordinate Mg(2+). Residue arginine 613 coordinates CoA. Lysine 638 carries the N6-acetyllysine modification.

This sequence belongs to the ATP-dependent AMP-binding enzyme family. Mg(2+) serves as cofactor. Post-translationally, acetylated. Deacetylation by the SIR2-homolog deacetylase activates the enzyme. The N-terminus is blocked.

The enzyme catalyses acetate + ATP + CoA = acetyl-CoA + AMP + diphosphate. In terms of biological role, catalyzes the conversion of acetate into acetyl-CoA (AcCoA), an essential intermediate at the junction of anabolic and catabolic pathways. AcsA undergoes a two-step reaction. In the first half reaction, AcsA combines acetate with ATP to form acetyl-adenylate (AcAMP) intermediate. In the second half reaction, it can then transfer the acetyl group from AcAMP to the sulfhydryl group of CoA, forming the product AcCoA. The chain is Acetyl-coenzyme A synthetase from Methanothrix soehngenii (Methanosaeta concilii).